The primary structure comprises 81 residues: Putative defensin-like protein 52 (81 aa).

The first 20 residues, 1-20 (MTFFLVIILAISSSNYNVLA), serve as a signal peptide directing secretion. Disulfide bonds link C31–C55 and C41–C64.

The protein belongs to the DEFL family.

The protein resides in the secreted. This is Putative defensin-like protein 52 from Arabidopsis thaliana (Mouse-ear cress).